The primary structure comprises 295 residues: Nucleotide-binding protein LACR_1047 (295 aa).

An ATP-binding site is contributed by 12–19; the sequence is GMSGAGKT. 63-66 contacts GTP; that stretch reads DMRS.

Belongs to the RapZ-like family.

In terms of biological role, displays ATPase and GTPase activities. This chain is Nucleotide-binding protein LACR_1047, found in Lactococcus lactis subsp. cremoris (strain SK11).